The chain runs to 266 residues: Isoprenyl transferase (266 aa).

Asp-36 is a catalytic residue. Mg(2+) is bound at residue Asp-36. Substrate contacts are provided by residues 37–40 (GNGR), Trp-41, Arg-49, His-53, and 81–83 (STE). Asn-84 acts as the Proton acceptor in catalysis. Residues Trp-85, Arg-87, Arg-204, and 210–212 (RIS) contribute to the substrate site. Glu-223 contacts Mg(2+).

This sequence belongs to the UPP synthase family. In terms of assembly, homodimer. Requires Mg(2+) as cofactor.

Functionally, catalyzes the condensation of isopentenyl diphosphate (IPP) with allylic pyrophosphates generating different type of terpenoids. The polypeptide is Isoprenyl transferase (Prochlorococcus marinus (strain SARG / CCMP1375 / SS120)).